Consider the following 185-residue polypeptide: Ribosome-recycling factor (185 aa).

The protein belongs to the RRF family.

The protein resides in the cytoplasm. Functionally, responsible for the release of ribosomes from messenger RNA at the termination of protein biosynthesis. May increase the efficiency of translation by recycling ribosomes from one round of translation to another. This chain is Ribosome-recycling factor, found in Geobacter sp. (strain M21).